The primary structure comprises 548 residues: Chaperonin GroEL 1 (548 aa).

Residues 30–33 (TLGP), lysine 51, 87–91 (DGTTT), glycine 415, 479–481 (NAA), and aspartate 495 contribute to the ATP site.

It belongs to the chaperonin (HSP60) family. In terms of assembly, forms a cylinder of 14 subunits composed of two heptameric rings stacked back-to-back. Interacts with the co-chaperonin GroES.

Its subcellular location is the cytoplasm. The enzyme catalyses ATP + H2O + a folded polypeptide = ADP + phosphate + an unfolded polypeptide.. Together with its co-chaperonin GroES, plays an essential role in assisting protein folding. The GroEL-GroES system forms a nano-cage that allows encapsulation of the non-native substrate proteins and provides a physical environment optimized to promote and accelerate protein folding. The polypeptide is Chaperonin GroEL 1 (Vibrio harveyi (Beneckea harveyi)).